The chain runs to 162 residues: Neuritin-like protein (162 aa).

Positions Met1–Ala32 are cleaved as a signal peptide. Residue Ala136 is the site of GPI-anchor amidated alanine attachment. Residues Pro137–Ala162 constitute a propeptide, removed in mature form.

This sequence belongs to the neuritin family.

The protein resides in the cell membrane. The polypeptide is Neuritin-like protein (Nrn1l) (Mus musculus (Mouse)).